A 263-amino-acid polypeptide reads, in one-letter code: Type III pantothenate kinase (263 aa).

9 to 16 serves as a coordination point for ATP; it reads DIGNTNVK. Substrate is bound by residues Tyr-103 and 110 to 113; that span reads GADR. Asp-112 functions as the Proton acceptor in the catalytic mechanism. Asp-134 contributes to the K(+) binding site. Thr-137 is a binding site for ATP. Substrate is bound at residue Thr-190.

Belongs to the type III pantothenate kinase family. Homodimer. It depends on NH4(+) as a cofactor. K(+) serves as cofactor.

The protein localises to the cytoplasm. It carries out the reaction (R)-pantothenate + ATP = (R)-4'-phosphopantothenate + ADP + H(+). It functions in the pathway cofactor biosynthesis; coenzyme A biosynthesis; CoA from (R)-pantothenate: step 1/5. Its function is as follows. Catalyzes the phosphorylation of pantothenate (Pan), the first step in CoA biosynthesis. The chain is Type III pantothenate kinase from Oleidesulfovibrio alaskensis (strain ATCC BAA-1058 / DSM 17464 / G20) (Desulfovibrio alaskensis).